Consider the following 336-residue polypeptide: Palmitoyltransferase PFA3 (336 aa).

Over 1–6 (MNDRLS) the chain is Cytoplasmic. A helical transmembrane segment spans residues 7–29 (LTSLFPRCLTTCLYIWTAYITLT). Over 30–37 (RIHQIPRW) the chain is Vacuolar. Residues 38-58 (FLALTIVPTLAVALYTYYKVI) form a helical membrane-spanning segment. Over 59–147 (ARGPGSPLDF…AECTGFRNQK (89 aa)) the chain is Cytoplasmic. Residues 104-154 (RVCQVCHVWKPDRCHHCSSCDVCILKMDHHCPWFAECTGFRNQKFFIQFLM) form the DHHC domain. A helical transmembrane segment spans residues 148 to 168 (FFIQFLMYTTLYAFLVLIYTC). The Vacuolar segment spans residues 169–188 (YELGTWFNSGSFNRELIDFH). The helical transmembrane segment at 189-209 (LLGVALLAVAVFISVLAFTCF) threads the bilayer. The Cytoplasmic segment spans residues 210-336 (SIYQVCKNQT…RASVEIIDAN (127 aa)).

Belongs to the DHHC palmitoyltransferase family. PFA3 subfamily. In terms of processing, autopalmitoylated.

The protein resides in the vacuole membrane. The catalysed reaction is L-cysteinyl-[protein] + hexadecanoyl-CoA = S-hexadecanoyl-L-cysteinyl-[protein] + CoA. Functionally, palmitoyltransferase specific for VAC8. Palmitoylates VAC8 at one or more of its N-terminal cysteine residues, which is required for its proper membrane localization. The protein is Palmitoyltransferase PFA3 (PFA3) of Saccharomyces cerevisiae (strain ATCC 204508 / S288c) (Baker's yeast).